Reading from the N-terminus, the 580-residue chain is (3S,6E)-nerolidol synthase 1, chloroplastic (580 aa).

The N-terminal 31 residues, 1 to 31 (MASSSWAFFKVFNPQIAPKSISHIGQSDLMQ), are a transit peptide targeting the chloroplast. Mg(2+)-binding residues include aspartate 334, aspartate 338, aspartate 478, serine 482, and glutamate 486. The DDXXD motif signature appears at 334–338 (DDIFD).

Belongs to the terpene synthase family. Tpsg subfamily. The cofactor is Mg(2+). It depends on Mn(2+) as a cofactor.

The protein localises to the plastid. The protein resides in the chloroplast. The catalysed reaction is (2E,6E)-farnesyl diphosphate + H2O = (3S,6E)-nerolidol + diphosphate. It functions in the pathway secondary metabolite biosynthesis; terpenoid biosynthesis. Functionally, involved in monoterpene (C10) and sesquiterpene (C15) biosynthesis. Converts geranyl diphosphate (GPP) into S-linalool and farnesyl diphosphate (FPP) into (3S)-E-nerolidol. Probably not expressed in wild strawberry species. This chain is (3S,6E)-nerolidol synthase 1, chloroplastic, found in Fragaria vesca (Woodland strawberry).